Here is a 332-residue protein sequence, read N- to C-terminus: Holliday junction branch migration complex subunit RuvB (332 aa).

Positions 1–181 (MARILDNNVM…FGITGHMEYY (181 aa)) are large ATPase domain (RuvB-L). ATP is bound by residues Leu20, Arg21, Gly62, Lys65, Thr66, Thr67, 128–130 (EDF), Arg171, Tyr181, and Arg218. Thr66 serves as a coordination point for Mg(2+). Positions 182 to 252 (QEKDLTEIVE…ITDRALTMLD (71 aa)) are small ATPAse domain (RuvB-S). A head domain (RuvB-H) region spans residues 255 to 332 (REGLDYIDQK…RHLGYPYQNT (78 aa)). DNA is bound by residues Arg291, Arg310, Arg312, and Arg315.

Belongs to the RuvB family. Homohexamer. Forms an RuvA(8)-RuvB(12)-Holliday junction (HJ) complex. HJ DNA is sandwiched between 2 RuvA tetramers; dsDNA enters through RuvA and exits via RuvB. An RuvB hexamer assembles on each DNA strand where it exits the tetramer. Each RuvB hexamer is contacted by two RuvA subunits (via domain III) on 2 adjacent RuvB subunits; this complex drives branch migration. In the full resolvosome a probable DNA-RuvA(4)-RuvB(12)-RuvC(2) complex forms which resolves the HJ.

It is found in the cytoplasm. The catalysed reaction is ATP + H2O = ADP + phosphate + H(+). In terms of biological role, the RuvA-RuvB-RuvC complex processes Holliday junction (HJ) DNA during genetic recombination and DNA repair, while the RuvA-RuvB complex plays an important role in the rescue of blocked DNA replication forks via replication fork reversal (RFR). RuvA specifically binds to HJ cruciform DNA, conferring on it an open structure. The RuvB hexamer acts as an ATP-dependent pump, pulling dsDNA into and through the RuvAB complex. RuvB forms 2 homohexamers on either side of HJ DNA bound by 1 or 2 RuvA tetramers; 4 subunits per hexamer contact DNA at a time. Coordinated motions by a converter formed by DNA-disengaged RuvB subunits stimulates ATP hydrolysis and nucleotide exchange. Immobilization of the converter enables RuvB to convert the ATP-contained energy into a lever motion, pulling 2 nucleotides of DNA out of the RuvA tetramer per ATP hydrolyzed, thus driving DNA branch migration. The RuvB motors rotate together with the DNA substrate, which together with the progressing nucleotide cycle form the mechanistic basis for DNA recombination by continuous HJ branch migration. Branch migration allows RuvC to scan DNA until it finds its consensus sequence, where it cleaves and resolves cruciform DNA. The protein is Holliday junction branch migration complex subunit RuvB of Streptococcus pyogenes serotype M1.